Here is a 245-residue protein sequence, read N- to C-terminus: Ribonuclease PH (245 aa).

Phosphate-binding positions include arginine 93 and glycine 131 to arginine 133.

The protein belongs to the RNase PH family. As to quaternary structure, homohexameric ring arranged as a trimer of dimers.

It carries out the reaction tRNA(n+1) + phosphate = tRNA(n) + a ribonucleoside 5'-diphosphate. Phosphorolytic 3'-5' exoribonuclease that plays an important role in tRNA 3'-end maturation. Removes nucleotide residues following the 3'-CCA terminus of tRNAs; can also add nucleotides to the ends of RNA molecules by using nucleoside diphosphates as substrates, but this may not be physiologically important. Probably plays a role in initiation of 16S rRNA degradation (leading to ribosome degradation) during starvation. The polypeptide is Ribonuclease PH (Corynebacterium glutamicum (strain ATCC 13032 / DSM 20300 / JCM 1318 / BCRC 11384 / CCUG 27702 / LMG 3730 / NBRC 12168 / NCIMB 10025 / NRRL B-2784 / 534)).